Reading from the N-terminus, the 1062-residue chain is Protein P1-P2 (1062 aa).

An N-terminal signal peptide occupies residues 1–20; it reads MNRFTAYAALFFIFSLCSTA. Helical transmembrane passes span 121–141, 144–164, and 172–192; these read AASV…WTLA, ITLF…LGCI, and ALSL…KIIW. A Peptidase S39 domain is found at 207–399; that stretch reads VEGYKGFSVP…GITSPNYVFE (193 aa). Active-site for protease activity residues include His-255, Asp-286, and Ser-354. The tract at residues 456 to 557 is disordered; the sequence is TNAPAEKTAQ…AEAQTKQTRK (102 aa). Residues 463-484 are compositionally biased toward polar residues; sequence TAQTNSAEKTAPSTSAEKTAPT. Positions 497 to 511 are enriched in basic residues; the sequence is QNKRQLRHPRRRYKR. Residues 541-553 are compositionally biased toward polar residues; the sequence is QGVSESPAEAQTK. One can recognise a RdRp catalytic domain in the interval 859–974; that stretch reads EHTRPTDCSG…APNSDLEEYK (116 aa).

Post-translationally, specific enzymatic cleavages in vivo yield mature proteins. The protease probably cleaves itself and releases the RdRp (Potential). Cleavages have been shown in the P1 protein, but since the N-terminus containing the serine protease is shared between P1 and P1-P2, cleavages should also occur within the P1-P2 protein.

The protein resides in the membrane. It carries out the reaction RNA(n) + a ribonucleoside 5'-triphosphate = RNA(n+1) + diphosphate. In terms of biological role, precursor from which the RNA-dependent RNA polymerase (RdRp) is probably released. RNA-dependent RNA polymerase plays an essential role in virus replication (Potential). The protein is Protein P1-P2 of Solanum tuberosum (Potato).